The chain runs to 165 residues: V-type proton ATPase 16 kDa proteolipid subunit (165 aa).

Over 1 to 10 (MPSTFSGDET) the chain is Lumenal. The chain crosses the membrane as a helical span at residues 11-33 (APFFGFLGAAAALVFSCMGAAYG). The Cytoplasmic segment spans residues 34-55 (TAKSGVGVASMGVMRPELVMKS). A helical membrane pass occupies residues 56–76 (IVPVVMAGVLGIYGLIIAVII). Residues 77–95 (STGINPKTKSYYLFDGYAH) lie on the Lumenal side of the membrane. A helical transmembrane segment spans residues 96–117 (LSSGLACGLAGLSAGMAIGIVG). Residues 118 to 129 (DAGVRANAQQPK) lie on the Cytoplasmic side of the membrane. A helical membrane pass occupies residues 130-155 (LFVGMILILIFAEALALYGLIVGIIL). Over 156 to 165 (SSRAGQSRAE) the chain is Lumenal.

The protein belongs to the V-ATPase proteolipid subunit family. V-ATPase is a heteromultimeric enzyme composed of a peripheral catalytic V1 complex (main components: subunits A, B, C, D, E, and F) attached to an integral membrane V0 proton pore complex (main component: the proteolipid protein; which is present as a hexamer that forms the proton-conducting pore).

It is found in the vacuole membrane. Its function is as follows. Proton-conducting pore forming subunit of the membrane integral V0 complex of vacuolar ATPase. V-ATPase is responsible for acidifying a variety of intracellular compartments in eukaryotic cells. This chain is V-type proton ATPase 16 kDa proteolipid subunit, found in Nicotiana tabacum (Common tobacco).